An 848-amino-acid polypeptide reads, in one-letter code: ATP-dependent Clp protease ATP-binding subunit ClpC1 (848 aa).

The Clp R domain maps to 2–144 (FERFTDRARR…RQQVIQLLSG (143 aa)). 2 repeat regions span residues 5–70 (FTDR…IGQG) and 80–144 (FTPR…LLSG). The i stretch occupies residues 171-418 (LDQFGRNLTA…RMRIRRMTAP (248 aa)). 216 to 223 (GEPGVGKT) contributes to the ATP binding site. The region spanning 425-460 (DEKIAEARREKESAIDAQDFEKAASLRDREKTLVAQ) is the UVR domain. Residues 479-670 (VDDEQIAEVL…VLIFTSNLGT (192 aa)) form an II region. Residue 553–560 (GPSGVGKT) participates in ATP binding. The disordered stretch occupies residues 821–848 (TGTRKPPAEPDLAKAGAHSAGGPEPAAR).

It belongs to the ClpA/ClpB family. ClpC subfamily.

ATP-dependent specificity component of the Clp protease. It directs the protease to specific substrates. Can perform chaperone functions in the absence of ClpP. Degrades anti-sigma-E factor RseA in the presence of ClpP2. The protein is ATP-dependent Clp protease ATP-binding subunit ClpC1 (clpC1) of Mycobacterium tuberculosis (strain ATCC 25618 / H37Rv).